A 338-amino-acid chain; its full sequence is Tetraacyldisaccharide 4'-kinase (338 aa).

67–74 (IAGGAGKT) is a binding site for ATP.

This sequence belongs to the LpxK family.

The catalysed reaction is a lipid A disaccharide + ATP = a lipid IVA + ADP + H(+). The protein operates within glycolipid biosynthesis; lipid IV(A) biosynthesis; lipid IV(A) from (3R)-3-hydroxytetradecanoyl-[acyl-carrier-protein] and UDP-N-acetyl-alpha-D-glucosamine: step 6/6. Transfers the gamma-phosphate of ATP to the 4'-position of a tetraacyldisaccharide 1-phosphate intermediate (termed DS-1-P) to form tetraacyldisaccharide 1,4'-bis-phosphate (lipid IVA). The polypeptide is Tetraacyldisaccharide 4'-kinase (Acidovorax ebreus (strain TPSY) (Diaphorobacter sp. (strain TPSY))).